The chain runs to 1177 residues: Chromosome partition protein Smc (1177 aa).

34–41 (ANGSGKSN) is an ATP binding site. Positions 167–506 (SGIAEYDSKK…IAAEAQREVR (340 aa)) form a coiled coil. One can recognise an SMC hinge domain in the interval 521–627 (GIYGTLAELI…VIVNSMEEAR (107 aa)). Residues 659–1012 (LAVDTTKLRE…NEIEKEKKNV (354 aa)) are a coiled coil.

The protein belongs to the SMC family. Homodimer.

It is found in the cytoplasm. Its function is as follows. Required for chromosome condensation and partitioning. Binds single-stranded but not double-stranded DNA. This chain is Chromosome partition protein Smc, found in Pyrococcus furiosus (strain ATCC 43587 / DSM 3638 / JCM 8422 / Vc1).